We begin with the raw amino-acid sequence, 96 residues long: Putative pterin-4-alpha-carbinolamine dehydratase (96 aa).

This sequence belongs to the pterin-4-alpha-carbinolamine dehydratase family.

The enzyme catalyses (4aS,6R)-4a-hydroxy-L-erythro-5,6,7,8-tetrahydrobiopterin = (6R)-L-erythro-6,7-dihydrobiopterin + H2O. The protein is Putative pterin-4-alpha-carbinolamine dehydratase of Prochlorococcus marinus (strain MIT 9312).